The chain runs to 322 residues: HPr kinase/phosphorylase (322 aa).

Catalysis depends on residues His146 and Lys167. 161–168 (GDSGLGKS) is a binding site for ATP. Position 168 (Ser168) interacts with Mg(2+). Residue Asp185 is the Proton acceptor; for phosphorylation activity. Proton donor; for dephosphorylation activity of the active site. Positions 209–218 (LEVRGLGLLD) are important for the catalytic mechanism of both phosphorylation and dephosphorylation. Glu210 serves as a coordination point for Mg(2+). The active site involves Arg250. The important for the catalytic mechanism of dephosphorylation stretch occupies residues 271–276 (QVAAGR).

Belongs to the HPrK/P family. In terms of assembly, homohexamer. Requires Mg(2+) as cofactor.

It carries out the reaction [HPr protein]-L-serine + ATP = [HPr protein]-O-phospho-L-serine + ADP + H(+). The enzyme catalyses [HPr protein]-O-phospho-L-serine + phosphate + H(+) = [HPr protein]-L-serine + diphosphate. Catalyzes the ATP- as well as the pyrophosphate-dependent phosphorylation of a specific serine residue in HPr, a phosphocarrier protein of the phosphoenolpyruvate-dependent sugar phosphotransferase system (PTS). HprK/P also catalyzes the pyrophosphate-producing, inorganic phosphate-dependent dephosphorylation (phosphorolysis) of seryl-phosphorylated HPr (P-Ser-HPr). The polypeptide is HPr kinase/phosphorylase (Paraburkholderia phytofirmans (strain DSM 17436 / LMG 22146 / PsJN) (Burkholderia phytofirmans)).